Here is a 259-residue protein sequence, read N- to C-terminus: Phosphate import ATP-binding protein PstB (259 aa).

The region spanning 11–254 (AEARNLNFYY…PQDKRTEDYI (244 aa)) is the ABC transporter domain. Residue 43–50 (GPSGCGKS) participates in ATP binding.

Belongs to the ABC transporter superfamily. Phosphate importer (TC 3.A.1.7) family. In terms of assembly, the complex is composed of two ATP-binding proteins (PstB), two transmembrane proteins (PstC and PstA) and a solute-binding protein (PstS).

The protein resides in the cell inner membrane. It carries out the reaction phosphate(out) + ATP + H2O = ADP + 2 phosphate(in) + H(+). Functionally, part of the ABC transporter complex PstSACB involved in phosphate import. Responsible for energy coupling to the transport system. This Dechloromonas aromatica (strain RCB) protein is Phosphate import ATP-binding protein PstB.